The sequence spans 499 residues: UPF0159 protein Ta1429 (499 aa).

ThyX domains lie at 1–246 and 271–476; these read MIDR…ALSQ and EKVR…IKFV.

Belongs to the UPF0159 family.

This Thermoplasma acidophilum (strain ATCC 25905 / DSM 1728 / JCM 9062 / NBRC 15155 / AMRC-C165) protein is UPF0159 protein Ta1429.